The following is a 123-amino-acid chain: Large ribosomal subunit protein bL17 (123 aa).

This sequence belongs to the bacterial ribosomal protein bL17 family. As to quaternary structure, part of the 50S ribosomal subunit. Contacts protein L32.

In Mycoplasma genitalium (strain ATCC 33530 / DSM 19775 / NCTC 10195 / G37) (Mycoplasmoides genitalium), this protein is Large ribosomal subunit protein bL17.